The primary structure comprises 210 residues: Homeobox protein Rhox5 (210 aa).

The segment at 29–117 (KAEAFLQAGE…KNGKPEDRQM (89 aa)) is disordered. Residues 117 to 175 (MPLQGSRFAQQRLSELQSILQRTNSFDVPREDLYRLMDTCVARVQNWFKIRRAAARRNR) constitute a DNA-binding region (homeobox; atypical).

It localises to the nucleus. Transcription factor required for differentiation of embryonic stem cells (ESCs) into primordial germ cells. The chain is Homeobox protein Rhox5 (Rhox5) from Mus minutoides (Southern African pygmy mouse).